The following is a 989-amino-acid chain: AP-2 complex subunit alpha-2 (989 aa).

4 HEAT repeats span residues 112 to 149 (EMLPLIINSFKEDLLARSDYFQSLALAAICNIGGKEVA), 188 to 225 (VTPDSWVERLVSVLDEPDFGVLTSLMSLLIELASENPI), 368 to 402 (IMIKKYQDTVLLSLKDSDISIRRRALDLLYGMCDK), and 403 to 440 (NTCKHIVAELLSYLQTADYAIREELVIKIANLAEKFAS). Residues 610-745 (DNSNTTSNTA…SSSPISSGGS (136 aa)) form a disordered region. Low complexity predominate over residues 611–623 (NSNTTSNTANNSN). Positions 624–638 (MINSQDSKISSGGFN) are enriched in polar residues. A compositionally biased stretch (low complexity) spans 639 to 703 (QSPQPSQQQQ…QPVYQQQQQA (65 aa)). The segment covering 704–714 (ESFSPVQSDTV) has biased composition (polar residues). Low complexity predominate over residues 715-745 (SSFGQQQQQQQGGFSSPTIQASSSPISSGGS).

It belongs to the adaptor complexes large subunit family. Adaptor protein complex 2 (AP-2) is a heterotetramer composed of two large adaptins (alpha-type and beta-type subunits), a medium adaptin (mu-type subunit AP50) and a small adaptin (sigma-type subunit AP17).

It is found in the cell membrane. Its subcellular location is the membrane. The protein localises to the coated pit. Component of the adaptor complexes which link clathrin to receptors in coated vesicles. Clathrin-associated protein complexes are believed to interact with the cytoplasmic tails of membrane proteins, leading to their selection and concentration. In Dictyostelium discoideum (Social amoeba), this protein is AP-2 complex subunit alpha-2 (ap2a1-1).